Reading from the N-terminus, the 1017-residue chain is DNA replication licensing factor MCM6 (1017 aa).

Disordered regions lie at residues 1 to 94 (MSSP…SFKS) and 200 to 257 (SDSL…TSPE). Over residues 24–34 (SIGAGFGSSSG) the composition is skewed to low complexity. Residues 35 to 83 (LDSQIGSRLHFPSSSQPHVSNSQTGPFVNDSTQFSSQRLQTDGSATNDM) show a composition bias toward polar residues. Position 78 is a phosphoserine (Ser78). Over residues 209–223 (DEGQADEDEQQDDDM) the composition is skewed to acidic residues. A compositionally biased stretch (polar residues) spans 224–257 (NGSSLPRDSGSSAAPGNGTSAMATRSITTSTSPE). 2 positions are modified to phosphoserine: Ser249 and Ser372. The MCM domain maps to 525–732 (IYDKLVRSIA…IDTELASHIV (208 aa)). 575-582 (GDPSTSKS) contributes to the ATP binding site. The short motif at 707 to 710 (SRFD) is the Arginine finger element. Thr766 carries the phosphothreonine modification. Residues 852 to 901 (IESQSHAASGNNDDNDDGTGSGVITSEPPADIEEGQSEATARPGTSEKKK) form a disordered region.

Belongs to the MCM family. As to quaternary structure, component of the MCM2-7 complex. The complex forms a toroidal hexameric ring with the proposed subunit order MCM2-MCM6-MCM4-MCM7-MCM3-MCM5; loaded onto DNA, forms a head-head double hexamer. Interacts with MCM10.

The protein resides in the nucleus. The enzyme catalyses ATP + H2O = ADP + phosphate + H(+). Acts as a component of the MCM2-7 complex (MCM complex) which is the putative replicative helicase essential for 'once per cell cycle' DNA replication initiation and elongation in eukaryotic cells. The active ATPase sites in the MCM2-7 ring are formed through the interaction surfaces of two neighboring subunits such that a critical structure of a conserved arginine finger motif is provided in trans relative to the ATP-binding site of the Walker A box of the adjacent subunit. The six ATPase active sites, however, are likely to contribute differentially to the complex helicase activity. Once loaded onto DNA, double hexamers can slide on dsDNA in the absence of ATPase activity. Required for the entry in S phase and for cell division. This Saccharomyces cerevisiae (strain ATCC 204508 / S288c) (Baker's yeast) protein is DNA replication licensing factor MCM6 (MCM6).